A 676-amino-acid polypeptide reads, in one-letter code: DNA-directed RNA polymerase subunit beta' (676 aa).

Zn(2+) is bound by residues C69, C71, C87, and C90. The Mg(2+) site is built by D489, D491, and D493.

The protein belongs to the RNA polymerase beta' chain family. RpoC1 subfamily. In plastids the minimal PEP RNA polymerase catalytic core is composed of four subunits: alpha, beta, beta', and beta''. When a (nuclear-encoded) sigma factor is associated with the core the holoenzyme is formed, which can initiate transcription. The cofactor is Mg(2+). Zn(2+) serves as cofactor.

The protein localises to the plastid. Its subcellular location is the chloroplast. It catalyses the reaction RNA(n) + a ribonucleoside 5'-triphosphate = RNA(n+1) + diphosphate. Functionally, DNA-dependent RNA polymerase catalyzes the transcription of DNA into RNA using the four ribonucleoside triphosphates as substrates. The sequence is that of DNA-directed RNA polymerase subunit beta' from Lolium perenne (Perennial ryegrass).